The primary structure comprises 217 residues: MTHSAWHDEIKQVLPKDYYRRINRFLDEVYATGVVYPPRDNVFKALQVTPLEETRVLILGQDPYHGPLQAQGLSFSVPDSIPAPPSLQNILEELAADIGVRNHHDLSSWAEQGVLLLNACLTVPEGRANGHAGLIWEPFTDAVIKVLNAKDRPVVFILWGAYARRKKALITNPIHHVIESPHPSPLSAYRGFFGSKPFSRANAILEKEGLGQIDWLK.

The active-site Proton acceptor is D62.

Belongs to the uracil-DNA glycosylase (UDG) superfamily. UNG family.

The protein localises to the cytoplasm. The catalysed reaction is Hydrolyzes single-stranded DNA or mismatched double-stranded DNA and polynucleotides, releasing free uracil.. In terms of biological role, excises uracil residues from the DNA which can arise as a result of misincorporation of dUMP residues by DNA polymerase or due to deamination of cytosine. In Streptococcus equi subsp. zooepidemicus (strain MGCS10565), this protein is Uracil-DNA glycosylase.